The primary structure comprises 568 residues: Autophagy-related protein 17 (568 aa).

2 disordered regions span residues 1–59 and 522–568; these read MASF…DSSE and SYEM…ERPF. Residues 522–546 are compositionally biased toward basic and acidic residues; it reads SYEMEAHGEPENEGKVETAYERETE.

It belongs to the ATG17 family.

Its subcellular location is the cytoplasm. The protein resides in the preautophagosomal structure membrane. Functionally, autophagy-specific protein that functions in response to autophagy-inducing signals as a scaffold to recruit other ATG proteins to organize pre-autophagosomal structure (PAS) formation. Modulates the timing and magnitude of the autophagy response, such as the size of the sequestering vesicles. Plays particularly a role in pexophagy and nucleophagy. This chain is Autophagy-related protein 17 (apg-9), found in Neurospora crassa (strain ATCC 24698 / 74-OR23-1A / CBS 708.71 / DSM 1257 / FGSC 987).